Consider the following 454-residue polypeptide: Signal recognition particle protein (454 aa).

GTP-binding positions include 102–109 (GLQGTGKT), 184–188 (DTAGR), and 242–245 (TKMD).

It belongs to the GTP-binding SRP family. SRP54 subfamily. In terms of assembly, part of the signal recognition particle protein translocation system, which is composed of SRP and FtsY.

It is found in the cytoplasm. The enzyme catalyses GTP + H2O = GDP + phosphate + H(+). Involved in targeting and insertion of nascent membrane proteins into the cytoplasmic membrane. Binds to the hydrophobic signal sequence of the ribosome-nascent chain (RNC) as it emerges from the ribosomes. The SRP-RNC complex is then targeted to the cytoplasmic membrane where it interacts with the SRP receptor FtsY. This is Signal recognition particle protein from Aquifex aeolicus (strain VF5).